The following is a 340-amino-acid chain: GTP 3',8-cyclase (340 aa).

A Radical SAM core domain is found at 8-227 (KLGRPIRDLR…EMIEQNFDIE (220 aa)). Arg17 is a GTP binding site. Positions 24 and 28 each coordinate [4Fe-4S] cluster. Tyr30 contacts S-adenosyl-L-methionine. [4Fe-4S] cluster is bound at residue Cys31. Arg71 is a GTP binding site. Gly75 contributes to the S-adenosyl-L-methionine binding site. Thr102 lines the GTP pocket. Ser126 contacts S-adenosyl-L-methionine. Lys163 lines the GTP pocket. An S-adenosyl-L-methionine-binding site is contributed by Met197. Positions 261 and 264 each coordinate [4Fe-4S] cluster. GTP is bound at residue 266 to 268 (RAR). Cys278 is a binding site for [4Fe-4S] cluster.

It belongs to the radical SAM superfamily. MoaA family. As to quaternary structure, monomer and homodimer. [4Fe-4S] cluster is required as a cofactor.

The catalysed reaction is GTP + AH2 + S-adenosyl-L-methionine = (8S)-3',8-cyclo-7,8-dihydroguanosine 5'-triphosphate + 5'-deoxyadenosine + L-methionine + A + H(+). It functions in the pathway cofactor biosynthesis; molybdopterin biosynthesis. Catalyzes the cyclization of GTP to (8S)-3',8-cyclo-7,8-dihydroguanosine 5'-triphosphate. The protein is GTP 3',8-cyclase of Staphylococcus saprophyticus subsp. saprophyticus (strain ATCC 15305 / DSM 20229 / NCIMB 8711 / NCTC 7292 / S-41).